The sequence spans 365 residues: UPF0718 protein MJ0584 (365 aa).

The next 11 helical transmembrane spans lie at M6–V26, L32–I52, V67–A87, A108–L128, A130–S150, I174–F194, L201–V221, I245–P265, F282–I302, L308–P328, and T344–L364.

This sequence belongs to the UPF0718 family.

Its subcellular location is the cell membrane. The sequence is that of UPF0718 protein MJ0584 from Methanocaldococcus jannaschii (strain ATCC 43067 / DSM 2661 / JAL-1 / JCM 10045 / NBRC 100440) (Methanococcus jannaschii).